Consider the following 274-residue polypeptide: uncharacterized protein (274 aa).

This is an uncharacterized protein from Methanocaldococcus jannaschii (strain ATCC 43067 / DSM 2661 / JAL-1 / JCM 10045 / NBRC 100440) (Methanococcus jannaschii).